The following is a 446-amino-acid chain: Adenylosuccinate synthetase 1 (446 aa).

GTP-binding positions include 20 to 26 (GDEGKGK) and 48 to 50 (GHT). Asp21 acts as the Proton acceptor in catalysis. Mg(2+)-binding residues include Asp21 and Gly48. IMP is bound by residues 21–24 (DEGK), 46–49 (NAGH), Thr137, Arg151, Gln232, Thr247, and Arg319. His49 acts as the Proton donor in catalysis. Residue 315 to 321 (SVTGRPR) coordinates substrate. GTP contacts are provided by residues Arg321, 347 to 349 (KLD), and 429 to 431 (STG).

This sequence belongs to the adenylosuccinate synthetase family. As to quaternary structure, homodimer. Mg(2+) serves as cofactor.

It localises to the cytoplasm. It catalyses the reaction IMP + L-aspartate + GTP = N(6)-(1,2-dicarboxyethyl)-AMP + GDP + phosphate + 2 H(+). Its pathway is purine metabolism; AMP biosynthesis via de novo pathway; AMP from IMP: step 1/2. Functionally, plays an important role in the de novo pathway of purine nucleotide biosynthesis. Catalyzes the first committed step in the biosynthesis of AMP from IMP. In Cupriavidus pinatubonensis (strain JMP 134 / LMG 1197) (Cupriavidus necator (strain JMP 134)), this protein is Adenylosuccinate synthetase 1.